We begin with the raw amino-acid sequence, 1560 residues long: Tenascin-N (1560 aa).

The first 26 residues, Met-1–Ala-26, serve as a signal peptide directing secretion. EGF-like domains follow at residues Asp-167 to Ala-198, Tyr-199 to Ser-229, and Glu-230 to Ser-260. Intrachain disulfides connect Cys-171–Cys-181, Cys-175–Cys-186, Cys-188–Cys-197, Cys-202–Cys-212, Cys-206–Cys-217, Cys-219–Cys-228, Cys-233–Cys-243, Cys-237–Cys-248, and Cys-250–Cys-259. Fibronectin type-III domains lie at Ala-264–Val-353, Val-354–Asp-444, Gly-445–Asp-532, Ser-533–Pro-622, Lys-623–Asp-706, Gly-709–Pro-798, Lys-799–Asp-882, Gly-885–Asp-970, Ser-973–Pro-1062, Lys-1063–Pro-1144, Ser-1149–Pro-1238, and Arg-1239–Arg-1325. Disordered regions lie at residues Gly-868–Asn-888 and Gly-1044–Lys-1063. A compositionally biased stretch (basic and acidic residues) spans Gly-1044–Ser-1061. The 218-residue stretch at Asp-1323 to Gly-1540 folds into the Fibrinogen C-terminal domain. N-linked (GlcNAc...) asparagine glycosylation is present at Asn-1411.

Belongs to the tenascin family. Homohexamer. Highest expression in kidney followed by spleen and brain. In brain, highest expression is found in hippocampus, cerebellum and olfactory bulb. Expressed in aortic valve, corneal limbus. Expressed in ribs periosteum. During a fracture repair process, expression increases in cells of newly formed perichondrium/peristeum surrounding the cartalaginous callus.

It is found in the secreted. It localises to the extracellular space. The protein localises to the extracellular matrix. Extracellular matrix protein that seems to be a ligand for ITGA8:ITGB1, ITGAV:ITGB1 and ITGA4:ITGB1. Involved in neurite outgrowth and cell migration in hippocampal explants. During endochondral bone formation, inhibits proliferation and differentiation of proteoblasts mediated by canonical WNT signaling. In tumors, stimulates angiogenesis by elongation, migration and sprouting of endothelial cells. Expressed in most mammary tumors, may facilitate tumorigenesis by supporting the migratory behavior of breast cancer cells. The sequence is that of Tenascin-N from Mus musculus (Mouse).